A 206-amino-acid chain; its full sequence is Thiamine-phosphate synthase (206 aa).

Residues 35-39 (QLRDK) and Asn67 contribute to the 4-amino-2-methyl-5-(diphosphooxymethyl)pyrimidine site. Residues Asp68 and Asp87 each coordinate Mg(2+). Ser106 contacts 4-amino-2-methyl-5-(diphosphooxymethyl)pyrimidine. 132–134 (TGT) contributes to the 2-[(2R,5Z)-2-carboxy-4-methylthiazol-5(2H)-ylidene]ethyl phosphate binding site. Lys135 is a binding site for 4-amino-2-methyl-5-(diphosphooxymethyl)pyrimidine. 2-[(2R,5Z)-2-carboxy-4-methylthiazol-5(2H)-ylidene]ethyl phosphate is bound by residues Gly163 and 183–184 (IS).

It belongs to the thiamine-phosphate synthase family. Mg(2+) serves as cofactor.

The enzyme catalyses 2-[(2R,5Z)-2-carboxy-4-methylthiazol-5(2H)-ylidene]ethyl phosphate + 4-amino-2-methyl-5-(diphosphooxymethyl)pyrimidine + 2 H(+) = thiamine phosphate + CO2 + diphosphate. It carries out the reaction 2-(2-carboxy-4-methylthiazol-5-yl)ethyl phosphate + 4-amino-2-methyl-5-(diphosphooxymethyl)pyrimidine + 2 H(+) = thiamine phosphate + CO2 + diphosphate. It catalyses the reaction 4-methyl-5-(2-phosphooxyethyl)-thiazole + 4-amino-2-methyl-5-(diphosphooxymethyl)pyrimidine + H(+) = thiamine phosphate + diphosphate. The protein operates within cofactor biosynthesis; thiamine diphosphate biosynthesis; thiamine phosphate from 4-amino-2-methyl-5-diphosphomethylpyrimidine and 4-methyl-5-(2-phosphoethyl)-thiazole: step 1/1. Condenses 4-methyl-5-(beta-hydroxyethyl)thiazole monophosphate (THZ-P) and 2-methyl-4-amino-5-hydroxymethyl pyrimidine pyrophosphate (HMP-PP) to form thiamine monophosphate (TMP). The chain is Thiamine-phosphate synthase from Methanospirillum hungatei JF-1 (strain ATCC 27890 / DSM 864 / NBRC 100397 / JF-1).